The primary structure comprises 144 residues: Nucleoside diphosphate kinase (144 aa).

Residues K11, F59, R87, T93, R104, and N114 each contribute to the ATP site. H117 acts as the Pros-phosphohistidine intermediate in catalysis.

It belongs to the NDK family. In terms of assembly, homotetramer. Mg(2+) serves as cofactor.

The protein localises to the cytoplasm. It carries out the reaction a 2'-deoxyribonucleoside 5'-diphosphate + ATP = a 2'-deoxyribonucleoside 5'-triphosphate + ADP. The enzyme catalyses a ribonucleoside 5'-diphosphate + ATP = a ribonucleoside 5'-triphosphate + ADP. Its function is as follows. Major role in the synthesis of nucleoside triphosphates other than ATP. The ATP gamma phosphate is transferred to the NDP beta phosphate via a ping-pong mechanism, using a phosphorylated active-site intermediate. The protein is Nucleoside diphosphate kinase of Psychromonas ingrahamii (strain DSM 17664 / CCUG 51855 / 37).